A 559-amino-acid chain; its full sequence is Cytochrome P450 86B1 (559 aa).

The chain crosses the membrane as a helical span at residues 31 to 51 (FLLRDVQILELLIAIFVFVAI). Residue Cys488 coordinates heme.

Belongs to the cytochrome P450 family. The cofactor is heme. Expressed in roots endodermis, anthers, stigmas, stomata of young pedicels of inflorescences, the placenta region of siliques, at the level of the hilum in matures seeds, at the junction of siliques to pedicels where abscission of floral parts takes place and in nectary glands.

The protein resides in the endoplasmic reticulum membrane. Involved in very long chain fatty acids (VLCFA) omega-hydroxylation. Required for the synthesis of saturated VLCFA alpha, omega-bifunctional suberin monomers. The chain is Cytochrome P450 86B1 (CYP86B1) from Arabidopsis thaliana (Mouse-ear cress).